We begin with the raw amino-acid sequence, 346 residues long: Phosphoribosylformylglycinamidine cyclo-ligase (346 aa).

The protein belongs to the AIR synthase family.

The protein localises to the cytoplasm. It catalyses the reaction 2-formamido-N(1)-(5-O-phospho-beta-D-ribosyl)acetamidine + ATP = 5-amino-1-(5-phospho-beta-D-ribosyl)imidazole + ADP + phosphate + H(+). Its pathway is purine metabolism; IMP biosynthesis via de novo pathway; 5-amino-1-(5-phospho-D-ribosyl)imidazole from N(2)-formyl-N(1)-(5-phospho-D-ribosyl)glycinamide: step 2/2. The protein is Phosphoribosylformylglycinamidine cyclo-ligase of Bacillus pumilus (strain SAFR-032).